The sequence spans 65 residues: uncharacterized protein (65 aa).

A disordered region spans residues 1 to 30; sequence MPAASLESLLPPPPGKLPSPPLRPHGKFQR. Pro residues predominate over residues 10 to 23; the sequence is LPPPPGKLPSPPLR.

This is an uncharacterized protein from Homo sapiens (Human).